The chain runs to 85 residues: Toxin CsE8 (85 aa).

Residues 1–19 (MNSLLMITACLVLFGTVWS) form the signal peptide. The LCN-type CS-alpha/beta domain maps to 20-83 (EKGYLVHEDT…TWPLIGKLCG (64 aa)). Cystine bridges form between cysteine 31–cysteine 82, cysteine 35–cysteine 58, cysteine 44–cysteine 63, and cysteine 48–cysteine 65. A Cysteine amide modification is found at cysteine 82.

Belongs to the long (4 C-C) scorpion toxin superfamily. Sodium channel inhibitor family. Beta subfamily. As to expression, expressed by the venom gland.

The protein localises to the secreted. In terms of biological role, beta toxins bind voltage-independently at site-4 of sodium channels (Nav) and shift the voltage of activation toward more negative potentials thereby affecting sodium channel activation and promoting spontaneous and repetitive firing. The polypeptide is Toxin CsE8 (Centruroides sculpturatus (Arizona bark scorpion)).